Here is a 230-residue protein sequence, read N- to C-terminus: Orotidine 5'-phosphate decarboxylase (230 aa).

Substrate-binding positions include Asp10, Lys31, 58 to 67, Thr117, Arg179, Gln188, Gly208, and Arg209; that span reads DLKLHDIPNT. The active-site Proton donor is the Lys60.

It belongs to the OMP decarboxylase family. Type 1 subfamily. Homodimer.

The enzyme catalyses orotidine 5'-phosphate + H(+) = UMP + CO2. It functions in the pathway pyrimidine metabolism; UMP biosynthesis via de novo pathway; UMP from orotate: step 2/2. Functionally, catalyzes the decarboxylation of orotidine 5'-monophosphate (OMP) to uridine 5'-monophosphate (UMP). This is Orotidine 5'-phosphate decarboxylase from Staphylococcus aureus (strain USA300).